The following is a 397-amino-acid chain: MNIHEYQGKEILASYGVRVQRGIVANNAVEAVAAAKQLTAETGTGWHVIKAQIHAGGRGKGGGVKLAKNLQQVEELAEQIIGMQLITPQTPPEGKKVNKVLVAEDVYYPGESETSEFYVSVLLNRGTGRNMIMYSTEGGMDIEEVAEHTPHLIFTEEIDPTVGLQGFQARRIAFNLGLSGNAFKEMVKFIDALYNAYIGSDASMFEINPVLKTSDNKILAVDAKVNIDDNALYRQPKYAEMRDIREENPIEVEAKEVGLNYVDLDGTVGCMVNGAGLAMATMDLIKYAGFEPANFLDVGGTADAKRVETAFRIILKDPNVKAILINIFGGIVRCDRVAQGVVDAYKNMGDAIKVPIIVRLQGTNAEIAKELIDNSGMPILSAVQFQEAADQVKAALS.

In terms of domain architecture, ATP-grasp spans 9–253 (KEILASYGVR…IREENPIEVE (245 aa)). ATP-binding positions include K50, 57–59 (GRG), V106, and E116. 2 residues coordinate Mg(2+): N208 and D222. Substrate-binding positions include N273 and 330 to 332 (GIV).

This sequence belongs to the succinate/malate CoA ligase beta subunit family. In terms of assembly, heterotetramer of two alpha and two beta subunits. Requires Mg(2+) as cofactor.

The enzyme catalyses succinate + ATP + CoA = succinyl-CoA + ADP + phosphate. It carries out the reaction GTP + succinate + CoA = succinyl-CoA + GDP + phosphate. The protein operates within carbohydrate metabolism; tricarboxylic acid cycle; succinate from succinyl-CoA (ligase route): step 1/1. Succinyl-CoA synthetase functions in the citric acid cycle (TCA), coupling the hydrolysis of succinyl-CoA to the synthesis of either ATP or GTP and thus represents the only step of substrate-level phosphorylation in the TCA. The beta subunit provides nucleotide specificity of the enzyme and binds the substrate succinate, while the binding sites for coenzyme A and phosphate are found in the alpha subunit. The polypeptide is Succinate--CoA ligase [ADP-forming] subunit beta (Flavobacterium johnsoniae (strain ATCC 17061 / DSM 2064 / JCM 8514 / BCRC 14874 / CCUG 350202 / NBRC 14942 / NCIMB 11054 / UW101) (Cytophaga johnsonae)).